The sequence spans 233 residues: Serine-rich 25 kDa antigen protein (233 aa).

A disordered region spans residues 35–219; the sequence is KNEASPEKLE…DNNNLDAASS (185 aa). A compositionally biased stretch (basic and acidic residues) spans 38–53; that stretch reads ASPEKLEEAEEKEKSS. Over residues 61–71 the composition is skewed to acidic residues; sequence SNEDNEDDEDE. 10 repeat units span residues 82 to 93, 102 to 113, 114 to 125, 126 to 137, 138 to 149, 150 to 161, 162 to 169, 170 to 177, 178 to 185, and 186 to 193. A 6 X 12 AA tandem repeats of S-S-S-D-K-P-D-N-K-P-E-A region spans residues 82-161; the sequence is SSSDKPDNKP…SDKPDNKPEA (80 aa). Residues 83–159 show a composition bias toward basic and acidic residues; it reads SSDKPDNKPE…SSSDKPDNKP (77 aa). Over residues 160–192 the composition is skewed to polar residues; it reads EASSTNKPEASSTNKPEASSTNKPEASSTNKPE. The tract at residues 162-193 is 4 X 8 AA tandem repeats of S-S-T-N-K-P-E-A; sequence SSTNKPEASSTNKPEASSTNKPEASSTNKPEA. A compositionally biased stretch (low complexity) spans 193-219; that stretch reads ASSTSNSNDKSGSSSDNDNNNLDAASS.

In terms of processing, phosphorylated on serine residue(s). O-glycosylated; glycans consist of single N-acetylglucosamine residues. Post-translationally, O-acylated; acyl group is probably palmitate, not myristate.

The protein resides in the cell membrane. In terms of biological role, plays a role in the adhesion to host cells. Involved in the adhesion to host apoptotic cells thereby facilitating their phagocytosis. The polypeptide is Serine-rich 25 kDa antigen protein (Entamoeba histolytica (strain ATCC 30459 / HM-1:IMSS / ABRM)).